Reading from the N-terminus, the 325-residue chain is 5-dehydro-2-deoxygluconokinase (325 aa).

The protein belongs to the carbohydrate kinase PfkB family.

It catalyses the reaction 5-dehydro-2-deoxy-D-gluconate + ATP = 6-phospho-5-dehydro-2-deoxy-D-gluconate + ADP + H(+). It functions in the pathway polyol metabolism; myo-inositol degradation into acetyl-CoA; acetyl-CoA from myo-inositol: step 5/7. Catalyzes the phosphorylation of 5-dehydro-2-deoxy-D-gluconate (2-deoxy-5-keto-D-gluconate or DKG) to 6-phospho-5-dehydro-2-deoxy-D-gluconate (DKGP). The sequence is that of 5-dehydro-2-deoxygluconokinase from Listeria innocua serovar 6a (strain ATCC BAA-680 / CLIP 11262).